The sequence spans 460 residues: Retinoic acid receptor alpha (460 aa).

The modulating stretch occupies residues 1–87; the sequence is MASNSSSCPT…PPPLPRIYKP (87 aa). The tract at residues 46 to 78 is disordered; that stretch reads HQLPVSGYSTPSPATVETQSTSSEEIVPSPPSP. Residues 52–69 show a composition bias toward polar residues; it reads GYSTPSPATVETQSTSSE. NR C4-type zinc fingers lie at residues 88 to 108 and 124 to 148; these read CFVC…CEGC and CHRD…LQKC. Residues 88–153 constitute a DNA-binding region (nuclear receptor); sequence CFVCQDKSSG…RLQKCFEVGM (66 aa). The hinge stretch occupies residues 154-182; that stretch reads SKESVRNDRNKKKKDVPKTECSESYIVTP. Residues 183–417 enclose the NR LBD domain; it reads EVEELIEKVR…PLIQEMLENS (235 aa). The 9aaTAD motif lies at 408-416; that stretch reads PLIQEMLEN. The interval 418-460 is disordered; it reads EGMDTLGGQPGGPRTGGLGPPPGSCSPSLSPSSTRSSPATHSP. Positions 425–435 are enriched in gly residues; sequence GQPGGPRTGGL. The span at 442–460 shows a compositional bias: low complexity; the sequence is CSPSLSPSSTRSSPATHSP.

This sequence belongs to the nuclear hormone receptor family. NR1 subfamily. In terms of assembly, heterodimer; with an RXR molecule. Binds DNA preferentially as a RAR/RXR heterodimer. As to expression, ubiquitous.

The protein localises to the nucleus. Functionally, receptor for retinoic acid. Retinoic acid receptors bind as heterodimers to their target response elements in response to their ligands, all-trans or 9-cis retinoic acid, and regulate gene expression in various biological processes. The RAR/RXR heterodimers bind to the retinoic acid response elements (RARE) composed of tandem 5'-AGGTCA-3' sites known as DR1-DR5. Required for hindbrain patterning and appears to be required for skin development. The polypeptide is Retinoic acid receptor alpha (RARA) (Gallus gallus (Chicken)).